Here is a 230-residue protein sequence, read N- to C-terminus: Large ribosomal subunit protein uL1 (230 aa).

This sequence belongs to the universal ribosomal protein uL1 family. Part of the 50S ribosomal subunit.

In terms of biological role, binds directly to 23S rRNA. The L1 stalk is quite mobile in the ribosome, and is involved in E site tRNA release. Protein L1 is also a translational repressor protein, it controls the translation of the L11 operon by binding to its mRNA. The protein is Large ribosomal subunit protein uL1 of Rubrobacter xylanophilus (strain DSM 9941 / JCM 11954 / NBRC 16129 / PRD-1).